Consider the following 243-residue polypeptide: Ornithine decarboxylase antizyme 3 (243 aa).

Phosphoserine is present on residues serine 6, serine 9, and serine 12.

It belongs to the ODC antizyme family. In terms of assembly, interacts with ODC1 and thereby sterically blocks ODC homodimerization. Interacts with AZIN2; this interaction disrupts the interaction between the antizyme and ODC1. Interacts with GGN. Isoform 2 interacts with PPP1R16A; Modulates PPP1CB activity. As to expression, testis-specific. Isoform 2 is expressed in outer dense fibers, fibrous sheath and the connecting piece of sperm.

The protein resides in the nucleus. Its subcellular location is the cytoplasm. It localises to the cell projection. The protein localises to the cilium. It is found in the flagellum. Its function is as follows. Ornithine decarboxylase (ODC) antizyme protein that negatively regulates ODC activity and intracellular polyamine biosynthesis and uptake in response to increased intracellular polyamine levels. Binds to ODC monomers, inhibiting the assembly of the functional ODC homodimers. Does not target the ODC monomers for degradation, which allows a protein synthesis-independent restoration of ODC activity. Stabilizes AZIN2 by interfering with its ubiquitination. Involved in the translocation of AZNI2 from ER-Golgi intermediate compartment (ERGIC) to the cytosol. Probably plays a key role in spermatogenesis by regulating the intracellular concentration of polyamines in haploid germ cells. Functionally, does not possess antizyme activity. Modulates PPP1CB activity through its interaction with PPP1R16A. This Rattus norvegicus (Rat) protein is Ornithine decarboxylase antizyme 3.